Consider the following 650-residue polypeptide: Fructose-1,6-bisphosphatase class 3 (650 aa).

This sequence belongs to the FBPase class 3 family. It depends on Mn(2+) as a cofactor.

The catalysed reaction is beta-D-fructose 1,6-bisphosphate + H2O = beta-D-fructose 6-phosphate + phosphate. The protein operates within carbohydrate biosynthesis; gluconeogenesis. This Staphylococcus saprophyticus subsp. saprophyticus (strain ATCC 15305 / DSM 20229 / NCIMB 8711 / NCTC 7292 / S-41) protein is Fructose-1,6-bisphosphatase class 3.